Consider the following 142-residue polypeptide: ATP synthase F(0) complex subunit C3, mitochondrial (142 aa).

The transit peptide at 1-67 (MFACAKLACT…REFQTSAISR (67 aa)) directs the protein to the mitochondrion. Residues 83–103 (VGVAGSGAGIGTVFGSLIIGY) traverse the membrane as a helical segment. At Lys-110 the chain carries N6,N6,N6-trimethyllysine. A helical membrane pass occupies residues 118–138 (ILGFALSEAMGLFCLMVAFLI).

The protein belongs to the ATPase C chain family. In terms of assembly, F-type ATPases have 2 components, CF(1) - the catalytic core - and CF(0) - the membrane proton channel. CF(1) has five subunits: alpha(3), beta(3), gamma(1), delta(1), epsilon(1). CF(0) has three main subunits: a, b and c. Interacts with TMEM70 and TMEM242. Post-translationally, trimethylated by ATPSCKMT at Lys-110. Methylation is required for proper incorporation of the C subunit into the ATP synthase complex and mitochondrial respiration.

The protein localises to the mitochondrion membrane. Functionally, mitochondrial membrane ATP synthase (F(1)F(0) ATP synthase or Complex V) produces ATP from ADP in the presence of a proton gradient across the membrane which is generated by electron transport complexes of the respiratory chain. F-type ATPases consist of two structural domains, F(1) - containing the extramembraneous catalytic core and F(0) - containing the membrane proton channel, linked together by a central stalk and a peripheral stalk. During catalysis, ATP synthesis in the catalytic domain of F(1) is coupled via a rotary mechanism of the central stalk subunits to proton translocation. Part of the complex F(0) domain. A homomeric c-ring of probably 10 subunits is part of the complex rotary element. This Homo sapiens (Human) protein is ATP synthase F(0) complex subunit C3, mitochondrial.